Consider the following 433-residue polypeptide: Adenylosuccinate synthetase (433 aa).

GTP is bound by residues 11–17 and 39–41; these read GDEGKGK and GHT. Asp12 (proton acceptor) is an active-site residue. Mg(2+) contacts are provided by Asp12 and Gly39. IMP-binding positions include 12-15, 37-40, Thr134, Arg148, Asn230, Thr245, and Arg309; these read DEGK and NAGH. The Proton donor role is filled by His40. A substrate-binding site is contributed by 305–311; that stretch reads VTTGRKR. Residues Arg311, 337–339, and 419–421 contribute to the GTP site; these read KLD and GTG.

Belongs to the adenylosuccinate synthetase family. Homodimer. Mg(2+) serves as cofactor.

It localises to the cytoplasm. The catalysed reaction is IMP + L-aspartate + GTP = N(6)-(1,2-dicarboxyethyl)-AMP + GDP + phosphate + 2 H(+). It functions in the pathway purine metabolism; AMP biosynthesis via de novo pathway; AMP from IMP: step 1/2. Plays an important role in the de novo pathway and in the salvage pathway of purine nucleotide biosynthesis. Catalyzes the first committed step in the biosynthesis of AMP from IMP. This Saccharomyces cerevisiae (strain AWRI1631) (Baker's yeast) protein is Adenylosuccinate synthetase.